The following is an 82-amino-acid chain: Metallothionein (82 aa).

Positions 6, 8, 11, 13, 29, 33, 37, 43, 48, and 50 each coordinate Cd(2+). The Zn(2+) site is built by C6, C8, and C11. Zn(2+)-binding residues include C29, C33, H37, C43, C48, and C50. The disordered stretch occupies residues 61–82 (ITNNQLDEALEETFPASDPISP).

It belongs to the metallothionein superfamily.

Its function is as follows. Metallothioneins are small proteins that have a high content of cysteine residues which allow them to bind heavy metal ions through clusters of thiolate bonds. Preferentially, binds four Cd(2+) ions. Also binds three Zn(2+) ions but with less affinity. Required for long-term viability. May play a role in the storage or sequestration of metals when present in excess. This Pseudomonas fluorescens (strain Q2-87) protein is Metallothionein.